The following is a 655-amino-acid chain: Sphingomyelin phosphodiesterase 3 (655 aa).

The Cytoplasmic segment spans residues M1 to N10. Residues S11 to V31 constitute an intramembrane region (helical). The Cytoplasmic portion of the chain corresponds to D32 to T64. S-palmitoyl cysteine attachment occurs at residues C53 and C59. An intramembrane region (helical) is located at residues P65–W85. The Cytoplasmic segment spans residues S86 to A655. S178 carries the phosphoserine modification. Disordered regions lie at residues V209–L237 and G250–K320. Residues Y211 to D221 show a composition bias toward basic and acidic residues. Residue S289 is modified to Phosphoserine. Residue E362 coordinates Mg(2+). Residues C395 and C396 are each lipidated (S-palmitoyl cysteine). H639 acts as the Proton acceptor in catalysis.

This sequence belongs to the neutral sphingomyelinase family. Mg(2+) is required as a cofactor. In terms of processing, palmitoylated, palmitoylation-deficient proteins are targeted for lysosomal degradation. In terms of tissue distribution, in brain sections, it is restricted to neurons and especially prominent in large cells, including Purkinje cells, pyramidal cells, neurons of the dentate gyrus granular layer, and neurons in the pontine nuclei. Also present in the hypothalamic nuclei, neurons in the piriform cortex, and nuclei of the brainstem (at protein level). Mainly expressed in brain and jejunum. Weakly or not expressed in heart, spleen, lung, liver, kidney and testis.

The protein localises to the golgi apparatus membrane. It localises to the cell membrane. It carries out the reaction a sphingomyelin + H2O = phosphocholine + an N-acylsphing-4-enine + H(+). It catalyses the reaction N-(15Z-tetracosenoyl)sphing-4-enine-1-phosphocholine + H2O = N-(15Z-tetracosenoyl)-sphing-4-enine + phosphocholine + H(+). The catalysed reaction is N-(tetracosanoyl)-sphing-4-enine-1-phosphocholine + H2O = N-tetracosanoyl-sphing-4-enine + phosphocholine + H(+). The enzyme catalyses an N-(acyl)-sphingosylphosphocholine + H2O = an N-acyl-sphingoid base + phosphocholine + H(+). It carries out the reaction 1-hexadecanoyl-sn-glycero-3-phosphocholine + H2O = 1-hexadecanoyl-sn-glycerol + phosphocholine + H(+). It catalyses the reaction 1-O-octadecyl-sn-glycero-3-phosphocholine + H2O = 1-O-octadecyl-sn-glycerol + phosphocholine + H(+). The catalysed reaction is a sphingosylphosphocholine + H2O = a sphingoid base + phosphocholine + H(+). The enzyme catalyses N-(hexadecanoyl)-sphing-4-enine-1-phosphocholine + H2O = N-hexadecanoylsphing-4-enine + phosphocholine + H(+). Its pathway is lipid metabolism; sphingolipid metabolism. Inhibited by nSMase inhibitor GW4869. Binding of anionic phospholipids (APLs) such as phosphatidylserine (PS) and phosphatidic acid (PA) increases enzymatic activity. Functionally, catalyzes the hydrolysis of sphingomyelin to form ceramide and phosphocholine. Ceramide mediates numerous cellular functions, such as apoptosis and growth arrest, and is capable of regulating these 2 cellular events independently. Also hydrolyzes sphingosylphosphocholine. Binds to anionic phospholipids (APLs) such as phosphatidylserine (PS) and phosphatidic acid (PA) that modulate enzymatic activity and subcellular location. Regulates the cell cycle by acting as a growth suppressor in confluent cells. Acts as a regulator of postnatal development and participates in bone and dentin mineralization. May be involved in IL-1-beta-induced JNK activation in hepatocytes. May act as a mediator in transcriptional regulation of NOS2/iNOS via the NF-kappa-B activation under inflammatory conditions. This Rattus norvegicus (Rat) protein is Sphingomyelin phosphodiesterase 3.